We begin with the raw amino-acid sequence, 141 residues long: MVDMDRISISLPTNLLAEFDEIIEERGYASRSEAIRDSIRDYLIKHKWIHSLEGERAGTISIIYDHHSTDVMEKLTNIQHDYEKLIVATIHMHLDHDHCMEVVLVKGDAGEIKELTDKLTSQKGVKQVKLTVMVPGGNIPQ.

Ni(2+) is bound by residues His-80, His-91, His-93, and Cys-99.

This sequence belongs to the transcriptional regulatory CopG/NikR family. Ni(2+) is required as a cofactor.

In terms of biological role, transcriptional regulator. The chain is Putative nickel-responsive regulator from Methanococcus maripaludis (strain DSM 14266 / JCM 13030 / NBRC 101832 / S2 / LL).